Here is a 149-residue protein sequence, read N- to C-terminus: D-aminoacyl-tRNA deacylase (149 aa).

The Gly-cisPro motif, important for rejection of L-amino acids motif lies at 137–138 (GP).

The protein belongs to the DTD family. As to quaternary structure, homodimer.

It localises to the cytoplasm. The enzyme catalyses glycyl-tRNA(Ala) + H2O = tRNA(Ala) + glycine + H(+). The catalysed reaction is a D-aminoacyl-tRNA + H2O = a tRNA + a D-alpha-amino acid + H(+). In terms of biological role, an aminoacyl-tRNA editing enzyme that deacylates mischarged D-aminoacyl-tRNAs. Also deacylates mischarged glycyl-tRNA(Ala), protecting cells against glycine mischarging by AlaRS. Acts via tRNA-based rather than protein-based catalysis; rejects L-amino acids rather than detecting D-amino acids in the active site. By recycling D-aminoacyl-tRNA to D-amino acids and free tRNA molecules, this enzyme counteracts the toxicity associated with the formation of D-aminoacyl-tRNA entities in vivo and helps enforce protein L-homochirality. This Clostridium novyi (strain NT) protein is D-aminoacyl-tRNA deacylase.